A 416-amino-acid polypeptide reads, in one-letter code: PTS system N-acetylglucosamine-specific EIIC component (416 aa).

The region spanning 16 to 406 is the PTS EIIC type-1 domain; sequence SGLFQGLQKV…FNLKTPGREP (391 aa). 10 helical membrane passes run 68 to 88, 96 to 116, 130 to 150, 170 to 190, 196 to 216, 266 to 286, 298 to 318, 323 to 343, 344 to 364, and 375 to 395; these read AGGA…AIGF, TALA…AFPV, TYND…AVLW, LVPI…GLVW, GISN…ALFG, IFQA…ALAM, VLGM…TEPI, MFIA…SMAI, TWGL…DYAL, and IIPI…FAIV.

Its subcellular location is the cell membrane. In terms of biological role, the phosphoenolpyruvate-dependent sugar phosphotransferase system (sugar PTS), a major carbohydrate active transport system, catalyzes the phosphorylation of incoming sugar substrates concomitantly with their translocation across the cell membrane. This system is involved in N-acetylglucosamine (GlcNAc) transport. High-affinity permease, which exhibits a narrow specificity for GlcNAc. Essential for C-signaling between vegetative growth and development. This is PTS system N-acetylglucosamine-specific EIIC component from Streptomyces coelicolor (strain ATCC BAA-471 / A3(2) / M145).